Consider the following 262-residue polypeptide: Small ribosomal subunit protein eS1 (262 aa).

This sequence belongs to the eukaryotic ribosomal protein eS1 family. Component of the small ribosomal subunit. Mature ribosomes consist of a small (40S) and a large (60S) subunit. The 40S subunit contains about 33 different proteins and 1 molecule of RNA (18S). The 60S subunit contains about 49 different proteins and 3 molecules of RNA (25S, 5.8S and 5S).

It is found in the cytoplasm. This chain is Small ribosomal subunit protein eS1, found in Brassica campestris (Field mustard).